The chain runs to 623 residues: NADPH-dependent diflavin oxidoreductase 1 (623 aa).

Residues 8 to 153 (LLVLYASQTG…TLDPWMLSLW (146 aa)) enclose the Flavodoxin-like domain. FMN-binding positions include 14 to 19 (SQTGNA), 62 to 65 (STTG), and D135. In terms of domain architecture, FAD-binding FR-type spans 221 to 467 (KPDCFLKMTR…SLPAPSQSLP (247 aa)). FAD-binding positions include R369, 399-402 (RAFS), and 433-436 (GLCS). Residues T475, 541-542 (SR), 547-551 (KVYVQ), and D583 contribute to the NADP(+) site. W622 contacts FAD.

Belongs to the NADPH-dependent diflavin oxidoreductase NDOR1 family. This sequence in the N-terminal section; belongs to the flavodoxin family. It in the C-terminal section; belongs to the flavoprotein pyridine nucleotide cytochrome reductase family. As to quaternary structure, interacts with At5g18400. The cofactor is FAD. Requires FMN as cofactor. Widely expressed.

The protein localises to the cytoplasm. It localises to the nucleus. It catalyses the reaction 2 oxidized [2Fe-2S]-[protein] + NADPH = 2 reduced [2Fe-2S]-[protein] + NADP(+) + H(+). In terms of biological role, NADPH-dependent reductase which is a central component of the cytosolic iron-sulfur (Fe-S) protein assembly (CIA) machinery. Transfers electrons from NADPH via its FAD and FMN prosthetic groups to the [2Fe-2S] cluster of the anamorsin/DRE2 homolog, another key component of the CIA machinery. In turn, this reduced cluster provides electrons for assembly of cytosolic iron-sulfur cluster proteins. Catalyzes the NADP-dependent reduction of cytochrome c, but not cytochrome P450 in vitro. Required for embryo development. This is NADPH-dependent diflavin oxidoreductase 1 (ATR3) from Arabidopsis thaliana (Mouse-ear cress).